Here is a 399-residue protein sequence, read N- to C-terminus: MSFSREEDKKLKFKTSKKLKISPTFESMNLKDDLLRGIYGYGFEAPSAIQSRAITQIISGTDVIAQAQSGTGKTATFTIGMLQAIDLKRKDLQALVLSPTRELASQINQVVSNLGDYMNVQSYAMTGGKTMKDDLNRMQKNGCQVVSGTPGRVLDMFKRHLLNTRNVQMLILDEADELLGESLGFKQQIYDIFTKLPAACQVVVVSATMSKDILEVTKKFMSDPVKILVKRDEISLEGIKQYYVNVEKEDWKFDTLCDLYDSLTITQCVIFCNTKKKVDWLSAKLTQSNFAVVSMHGDMKQEDRNKVMSDFRSGHSRVLISTDVWARGIDVQQVSLVINYDIPEIMENYIHRIGRSGRFGRKGVAINFITSSDLSKMKEIEKYYRIKISPVPADLSTIS.

A Q motif motif is present at residues Pro23–Ser51. In terms of domain architecture, Helicase ATP-binding spans Ile54–Ile227. Ala67–Thr74 contributes to the ATP binding site. The short motif at Asp173–Asp176 is the DEAD box element. The 162-residue stretch at Gly238–Ser399 folds into the Helicase C-terminal domain.

Belongs to the DEAD box helicase family. DDX48/FAL1 subfamily.

The protein localises to the nucleus. Its subcellular location is the nucleolus. The catalysed reaction is ATP + H2O = ADP + phosphate + H(+). ATP-dependent RNA helicase involved in 40S ribosomal subunit biogenesis. Required for the processing and cleavage of 35S pre-rRNA at sites A0, A1, and A2, leading to mature 18S rRNA. The sequence is that of ATP-dependent RNA helicase FAL1 (FAL1) from Vanderwaltozyma polyspora (strain ATCC 22028 / DSM 70294 / BCRC 21397 / CBS 2163 / NBRC 10782 / NRRL Y-8283 / UCD 57-17) (Kluyveromyces polysporus).